Here is a 586-residue protein sequence, read N- to C-terminus: Dual specificity tyrosine-phosphorylation-regulated kinase 3 (586 aa).

Positions 1–13 (MGGAARERGRKDA) are enriched in basic and acidic residues. Positions 1 to 187 (MGGAARERGR…QGVIGGPNNG (187 aa)) are disordered. One can recognise a Protein kinase domain in the interval 208 to 521 (YEVLKIIGKG…PAQALRHPWI (314 aa)). Residues 214 to 222 (IGKGSFGQV), K237, and 287 to 290 (FELL) each bind ATP. D334 acts as the Proton acceptor in catalysis. Position 368 is a phosphotyrosine (Y368). The short motif at 467 to 480 (RSRRGKKRGPPGSK) is the Nuclear localization signal element.

The protein belongs to the protein kinase superfamily. CMGC Ser/Thr protein kinase family. MNB/DYRK subfamily. As to quaternary structure, interacts with SIRT1. Mg(2+) serves as cofactor. In terms of processing, protein kinase activity is activated following autophosphorylation at Tyr-368. Post-translationally, ubiquitinated at anaphase by the anaphase-promoting complex (APC/C), leading to its degradation by the proteasome. As to expression, expressed predominantly in testis. Expressed in late pachytene spermatocytes.

It localises to the nucleus. Its subcellular location is the cytoplasm. It is found in the nucleus speckle. The protein resides in the cytoplasmic granule. The protein localises to the cytoskeleton. It localises to the microtubule organizing center. Its subcellular location is the centrosome. The enzyme catalyses L-seryl-[protein] + ATP = O-phospho-L-seryl-[protein] + ADP + H(+). It catalyses the reaction L-threonyl-[protein] + ATP = O-phospho-L-threonyl-[protein] + ADP + H(+). The catalysed reaction is L-tyrosyl-[protein] + ATP = O-phospho-L-tyrosyl-[protein] + ADP + H(+). With respect to regulation, protein kinase activity is activated following autophosphorylation at Tyr-368. Functionally, dual-specificity protein kinase that promotes disassembly of several types of membraneless organelles during mitosis, such as stress granules, nuclear speckles and pericentriolar material. Dual-specificity tyrosine-regulated kinases (DYRKs) autophosphorylate a critical tyrosine residue in their activation loop and phosphorylate their substrate on serine and threonine residues. Acts as a central dissolvase of membraneless organelles during the G2-to-M transition, after the nuclear-envelope breakdown: acts by mediating phosphorylation of multiple serine and threonine residues in unstructured domains of proteins, such as SRRM1 and PCM1. Does not mediate disassembly of all membraneless organelles: disassembly of P-body and nucleolus is not regulated by DYRK3. Dissolution of membraneless organelles at the onset of mitosis is also required to release mitotic regulators, such as ZNF207, from liquid-unmixed organelles where they are sequestered and keep them dissolved during mitosis. Regulates mTORC1 by mediating the dissolution of stress granules: during stressful conditions, DYRK3 partitions from the cytosol to the stress granule, together with mTORC1 components, which prevents mTORC1 signaling. When stress signals are gone, the kinase activity of DYRK3 is required for the dissolution of stress granule and mTORC1 relocation to the cytosol: acts by mediating the phosphorylation of the mTORC1 inhibitor AKT1S1, allowing full reactivation of mTORC1 signaling. Also acts as a negative regulator of EPO-dependent erythropoiesis: may place an upper limit on red cell production during stress erythropoiesis. Inhibits cell death due to cytokine withdrawal in hematopoietic progenitor cells. Promotes cell survival upon genotoxic stress through phosphorylation of SIRT1: this in turn inhibits p53/TP53 activity and apoptosis. This Rattus norvegicus (Rat) protein is Dual specificity tyrosine-phosphorylation-regulated kinase 3.